We begin with the raw amino-acid sequence, 172 residues long: Small ribosomal subunit protein uS5 (172 aa).

The 64-residue stretch at 15–78 (LNDKLIFINR…ANAKRNLSRI (64 aa)) folds into the S5 DRBM domain.

It belongs to the universal ribosomal protein uS5 family. In terms of assembly, part of the 30S ribosomal subunit. Contacts proteins S4 and S8.

Its function is as follows. With S4 and S12 plays an important role in translational accuracy. In terms of biological role, located at the back of the 30S subunit body where it stabilizes the conformation of the head with respect to the body. The polypeptide is Small ribosomal subunit protein uS5 (Dehalococcoides mccartyi (strain ATCC BAA-2266 / KCTC 15142 / 195) (Dehalococcoides ethenogenes (strain 195))).